The primary structure comprises 478 residues: Odorant receptor coreceptor (478 aa).

Topologically, residues 1 to 43 (MMKMKQQGLVADLLPNIRVMKTFGHFVFNYYNDNSSKYLHKVY) are cytoplasmic. The helical transmembrane segment at 44-64 (CCVNLFMLLLQFGLCAVNLIV) threads the bilayer. Topologically, residues 65-73 (ESADVDDLT) are extracellular. A helical transmembrane segment spans residues 74 to 94 (ANTITLLFFTHSIVKICYFAI). At 95–133 (RSKYFYRTWAIWNNPNSHPLFAESNARYHAIALKKMRLL) the chain is on the cytoplasmic side. The chain crosses the membrane as a helical span at residues 134-154 (LFLVGGTTMLAAVAWTVLTFF). Residues 155–190 (EHPIRKIVDPVTNETEIIELPQLLIRSFYPFDAGKG) lie on the Extracellular side of the membrane. Asparagine 167 carries N-linked (GlcNAc...) asparagine glycosylation. The chain crosses the membrane as a helical span at residues 191 to 211 (ITHVLVLVYQFYWVLFMLIDA). At 212 to 349 (NSLDVLFCSW…IVRLVTAVGD (138 aa)) the chain is on the cytoplasmic side. The disordered stretch occupies residues 261–281 (SADHLRDGDNPPPPPPPQSDN). A helical transmembrane segment spans residues 350–370 (AYGFALLLHMLTTTITLTLLA). Residues 371-382 (YQATKVNGINVY) are Extracellular-facing. Residues 383–403 (AASTIGYILYTFGQVFLFCIF) traverse the membrane as a helical segment. The Cytoplasmic portion of the chain corresponds to 404–454 (GNRLIEESTSVMEAAYSCHWYDGSEEAKTFVQIVCQQCQKAMSISGAKFFT). Residues 455–475 (VSLDLFASVLGAVVTYFMVLV) traverse the membrane as a helical segment. The Extracellular portion of the chain corresponds to 476-478 (QLK).

It belongs to the insect chemoreceptor superfamily. Heteromeric odorant receptor channel (TC 1.A.69) family. Orco subfamily. In terms of assembly, heterodimer with conventional odorant receptors (ORs). Present in antennae (at protein level).

Its subcellular location is the cell membrane. Functionally, odorant coreceptor which complexes with conventional odorant receptors (ORs) to form odorant-sensing units, providing sensitive and prolonged odorant signaling and calcium permeability. Obligate coreceptor of all odorant receptors. Orco is a universal and integral part of the functional odorant receptor, involved in the dendritic localization of other olfactory receptors. Can form functional ion channels in the absence of an odor-binding odorant receptor. Plays a central role in the perception of olfactory stimuli in ants and is essential for ant social organization. Required for pheromone sensing. Also required for the development and maintenance of odorant receptor neurons (ORNs) and of antennal lobe glomeruli. The sequence is that of Odorant receptor coreceptor from Ooceraea biroi (Clonal raider ant).